The chain runs to 168 residues: 3-isopropylmalate dehydratase small subunit 2 (168 aa).

The protein belongs to the LeuD family. LeuD type 2 subfamily. Heterodimer of LeuC and LeuD.

It catalyses the reaction (2R,3S)-3-isopropylmalate = (2S)-2-isopropylmalate. It participates in amino-acid biosynthesis; L-leucine biosynthesis; L-leucine from 3-methyl-2-oxobutanoate: step 2/4. Its function is as follows. Catalyzes the isomerization between 2-isopropylmalate and 3-isopropylmalate, via the formation of 2-isopropylmaleate. In Methanopyrus kandleri (strain AV19 / DSM 6324 / JCM 9639 / NBRC 100938), this protein is 3-isopropylmalate dehydratase small subunit 2 (leuD2).